A 682-amino-acid polypeptide reads, in one-letter code: Potassium-transporting ATPase ATP-binding subunit (682 aa).

4 consecutive transmembrane segments (helical) span residues 34–54, 58–78, 219–239, and 254–274; these read PVMF…LAMV, IAGS…TVLF, IALT…TATL, and VLVA…LSAI. Residue Asp307 is the 4-aspartylphosphate intermediate of the active site. ATP is bound by residues Asp344, Glu348, 377–384, and Lys395; that span reads FTAQSRMS. Residues Asp518 and Asp522 each coordinate Mg(2+). The next 3 membrane-spanning stretches (helical) occupy residues 588-608, 616-636, and 662-682; these read FAII…LNVM, AILS…PLAL, and LVVP…LGLA.

The protein belongs to the cation transport ATPase (P-type) (TC 3.A.3) family. Type IA subfamily. The system is composed of three essential subunits: KdpA, KdpB and KdpC.

The protein resides in the cell inner membrane. It catalyses the reaction K(+)(out) + ATP + H2O = K(+)(in) + ADP + phosphate + H(+). Functionally, part of the high-affinity ATP-driven potassium transport (or Kdp) system, which catalyzes the hydrolysis of ATP coupled with the electrogenic transport of potassium into the cytoplasm. This subunit is responsible for energy coupling to the transport system and for the release of the potassium ions to the cytoplasm. This chain is Potassium-transporting ATPase ATP-binding subunit, found in Salmonella choleraesuis (strain SC-B67).